Here is a 307-residue protein sequence, read N- to C-terminus: Fructokinase (307 aa).

The protein belongs to the carbohydrate kinase PfkB family.

The enzyme catalyses D-fructose + ATP = D-fructose 6-phosphate + ADP + H(+). In Escherichia coli, this protein is Fructokinase (cscK).